The following is a 2507-amino-acid chain: Highly reducing polyketide synthase lcsB (2507 aa).

Positions 2–393 (AEPIAVVGMA…GVNAHVIVES (392 aa)) constitute a Ketosynthase family 3 (KS3) domain. A disordered region spans residues 399-501 (NHDRGLSNGS…RNGYSGDDVE (103 aa)). Polar residues-rich tracts occupy residues 405 to 414 (SNGSTTSSSP) and 470 to 488 (NDTP…TSHT). A malonyl-CoA:ACP transacylase (MAT) domain region spans residues 581-900 (WVFTGQGAQW…DESLLQLAGK (320 aa)). Positions 953–1080 (HELLGSRVTE…GEARASVDKA (128 aa)) are N-terminal hotdog fold. Residues 953 to 1232 (HELLGSRVTE…FKASALTRSD (280 aa)) form a dehydratase (DH) domain region. The region spanning 953–1234 (HELLGSRVTE…ASALTRSDDE (282 aa)) is the PKS/mFAS DH domain. The Proton acceptor; for dehydratase activity role is filled by His-984. The C-terminal hotdog fold stretch occupies residues 1092–1234 (ARTVDANEWY…ASALTRSDDE (143 aa)). The active-site Proton donor; for dehydratase activity is Asp-1151. The methyltransferase (CMet) domain stretch occupies residues 1402-1570 (LGHTNPRLRI…EMVAAGFAEP (169 aa)). The enoyl reductase (ER) (ER) domain stretch occupies residues 1793–2105 (GLLHTMGWSQ…GGRHIGKIIV (313 aa)). Positions 2130–2303 (SYLLVGGLGG…ASVIDIGVMG (174 aa)) are ketoreductase (KR) domain. Positions 2425-2503 (EESTVIIATA…SLGDYIRTAL (79 aa)) constitute a Carrier domain. O-(pantetheine 4'-phosphoryl)serine is present on Ser-2463.

The protein operates within secondary metabolite biosynthesis. Its function is as follows. Highly reducing polyketide synthase; part of the gene cluster that mediates the biosynthesis of the lipopeptide antibiotics leucinostatins that show extensive biological activities, including antimalarial, antiviral, antibacterial, antifungal, and antitumor activities, as well as phytotoxic. Leucinostatin A contains nine amino acid residues, including the unusual amino acid 4-methyl-L-proline (MePro), 2-amino-6-hydroxy-4-methyl-8-oxodecanoic acid (AHyMeOA), 3-hydroxyleucine (HyLeu), alpha-aminoisobutyric acid (AIB), beta-Ala, a 4-methylhex-2-enoic acid at the N-terminus as well as a N1,N1-dimethylpropane-1,2-diamine (DPD) at the C-terminus. The biosynthesis of leucinostatins is probably initiated with the assembly of 4-methylhex-2-enoic acid by a reducing PKS. Two reducing polyketide synthases, lcsB and lcsC, have been identified in the cluster and it is not clear which is the one that assembles 4-methylhex-2-enoic acid since both contain KS, AT, DH, cMT, ER, KR and ACP domains. The polyketide residue might be transferred to the NRPS lcsA, mediated by two additional enzymes, the acyl-CoA ligase lcsD and the thioesterase lcsE. The linear polyketide carboxylic acid, which is released from PKS, is converted to a CoA thioester by lcsD, and then lcsE hydrolyzes the thiol bond and shuttles the polyketide intermediate to lcsA. The C domain of the first module catalyzed the condensation of 4-methylhex-2-enoic acid and MePro carried by domain A1, followed by successive condensations of nine amino acids to trigger the elongation of the linear peptide. A5 and A6 domains of lcsA are proposed to incorporate leucine, A2 AHyMeOA, and A3 incorporates HyLeu. A4, A7 and A8 incorporate AIB. The AHyMeOA in leucinostatin A activated by the A2 might be produced by the second PKS (lcsB or lcsC) present within the cluster. The MePro is probably produced via leucine cyclization and may originate from a separate pathway, independent of the cluster. Another nonproteinogenic amino acid, beta-Ala, could be produced by an aspartic acid decarboxylase also localized outside of the cluster. Two candidates are VFPBJ_01400 and VFPBJ_10476. The final peptide scaffold may be released by the NAD(P)H-dependent thioester reductase (TE) at the C-terminal region of lcsA. Transamination of the lcsA product by the transaminase lcsP may produce DPD at the C-terminus. Further hydroxylation steps performed alternatively by the cytochrome P450 monooxygenases lcsI, lcsK andr lcsN then yield the non-methylated leucinostatins precursor. It is also possible that leucines can be hydroxylated prior to their incorporation into the peptide. Varying extents of methylation then lead to the formation of leucinostatins A and B. The chain is Highly reducing polyketide synthase lcsB from Purpureocillium lilacinum (Paecilomyces lilacinus).